We begin with the raw amino-acid sequence, 856 residues long: Genome polyprotein (856 aa).

Residues 141 to 284 (KLTEGQMNHL…QSVLNSMIQF (144 aa)) form the Peptidase S30 domain. Catalysis depends on for P1 proteinase activity residues His192, Asp201, and Ser235. Positions 334-337 (KITC) match the Involved in interaction with stylet and aphid transmission motif. The Involved in virions binding and aphid transmission signature appears at 592-594 (PTK). Positions 618–740 (LYIAKQGYCY…ESDIKHYRVG (123 aa)) constitute a Peptidase C6 domain. Catalysis depends on for helper component proteinase activity residues Cys626 and His699.

This sequence belongs to the potyviridae genome polyprotein family. Genome polyprotein of potyviruses undergoes post-translational proteolytic processing by the main proteinase NIa-pro resulting in the production of at least ten individual proteins. The P1 proteinase and the HC-pro cleave only their respective C-termini autocatalytically. 6K1 is essential for proper proteolytic separation of P3 from CI.

It catalyses the reaction Hydrolyzes a Gly-|-Gly bond at its own C-terminus, commonly in the sequence -Tyr-Xaa-Val-Gly-|-Gly, in the processing of the potyviral polyprotein.. Its function is as follows. Required for aphid transmission and also has proteolytic activity. Only cleaves a Gly-Gly dipeptide at its own C-terminus. Interacts with virions and aphid stylets. Acts as a suppressor of RNA-mediated gene silencing, also known as post-transcriptional gene silencing (PTGS), a mechanism of plant viral defense that limits the accumulation of viral RNAs. May have RNA-binding activity. This Potato virus Y (strain O) (PVY) protein is Genome polyprotein.